Here is a 179-residue protein sequence, read N- to C-terminus: MSVMDALFLLATEEVGHFGINTNLLETNVINLAILIGVLVYFGRGVLGKTLGDRQKQIATAIAEAEERQKVAAARLAEAQQKLTQAKQEAQRIREDALTRAKAVKEEIIAQAKREIERLQETASQDTSAATERAIAEIRERIAAMALAEAENQLKARLSQNPDLQRTLIDRSIALLGGK.

The chain crosses the membrane as a helical span at residues 29-48; the sequence is VINLAILIGVLVYFGRGVLG.

The protein belongs to the ATPase B chain family. In terms of assembly, F-type ATPases have 2 components, F(1) - the catalytic core - and F(0) - the membrane proton channel. F(1) has five subunits: alpha(3), beta(3), gamma(1), delta(1), epsilon(1). F(0) has four main subunits: a(1), b(1), b'(1) and c(10-14). The alpha and beta chains form an alternating ring which encloses part of the gamma chain. F(1) is attached to F(0) by a central stalk formed by the gamma and epsilon chains, while a peripheral stalk is formed by the delta, b and b' chains.

The protein resides in the cellular thylakoid membrane. In terms of biological role, f(1)F(0) ATP synthase produces ATP from ADP in the presence of a proton or sodium gradient. F-type ATPases consist of two structural domains, F(1) containing the extramembraneous catalytic core and F(0) containing the membrane proton channel, linked together by a central stalk and a peripheral stalk. During catalysis, ATP synthesis in the catalytic domain of F(1) is coupled via a rotary mechanism of the central stalk subunits to proton translocation. Functionally, component of the F(0) channel, it forms part of the peripheral stalk, linking F(1) to F(0). The complex from the organism is particularly stable to disruption and remains functional after 6 hrs at 55 degrees Celsius. The sequence is that of ATP synthase subunit b from Thermosynechococcus vestitus (strain NIES-2133 / IAM M-273 / BP-1).